Reading from the N-terminus, the 129-residue chain is Follitropin subunit beta (129 aa).

The first 20 residues, 1-20, serve as a signal peptide directing secretion; that stretch reads MKSLQFCFLFCCWKAICCNS. 6 cysteine pairs are disulfide-bonded: cysteine 21/cysteine 69, cysteine 35/cysteine 84, cysteine 38/cysteine 122, cysteine 46/cysteine 100, cysteine 50/cysteine 102, and cysteine 105/cysteine 112. N-linked (GlcNAc...) asparagine glycosylation is found at asparagine 25 and asparagine 42.

This sequence belongs to the glycoprotein hormones subunit beta family. In terms of assembly, heterodimer. The active follitropin is a heterodimer composed of an alpha chain/CGA shared with other hormones and a unique beta chain/FSHB shown here.

It is found in the secreted. Functionally, together with the alpha chain CGA constitutes follitropin, the follicle-stimulating hormone, and provides its biological specificity to the hormone heterodimer. Binds FSHR, a G protein-coupled receptor, on target cells to activate downstream signaling pathways. Follitropin is involved in follicle development and spermatogenesis in reproductive organs. The polypeptide is Follitropin subunit beta (FSHB) (Sus scrofa (Pig)).